The primary structure comprises 749 residues: Replication restart protein PriA (749 aa).

The 168-residue stretch at 224 to 391 (SLKTSQFHTH…LSGKYVLSRL (168 aa)) folds into the Helicase ATP-binding domain. 237 to 244 (GITGSGKT) contributes to the ATP binding site. Residues 333 to 336 (DEEH) carry the DEAH box motif. Zn(2+) contacts are provided by C454, C457, C463, C466, C481, C484, C495, and C498. Positions 490-658 (DLPQSCPKCL…EYPPFIRLIR (169 aa)) constitute a Helicase C-terminal domain.

It belongs to the helicase family. PriA subfamily. As to quaternary structure, component of the replication restart primosome. Zn(2+) serves as cofactor.

The enzyme catalyses Couples ATP hydrolysis with the unwinding of duplex DNA by translocating in the 3'-5' direction.. It carries out the reaction ATP + H2O = ADP + phosphate + H(+). Its function is as follows. Initiates the restart of stalled replication forks, which reloads the replicative helicase on sites other than the origin of replication. Recognizes and binds to abandoned replication forks and remodels them to uncover a helicase loading site. Promotes assembly of the primosome at these replication forks. This Chlamydia pneumoniae (Chlamydophila pneumoniae) protein is Replication restart protein PriA.